We begin with the raw amino-acid sequence, 362 residues long: Myricetin 3'-O-methyltransferase 4 (362 aa).

An S-adenosyl-L-methionine-binding site is contributed by Asp-229. His-267 functions as the Proton acceptor in the catalytic mechanism.

The protein belongs to the class I-like SAM-binding methyltransferase superfamily. Cation-independent O-methyltransferase family. In terms of assembly, homodimer. In terms of tissue distribution, mainly expressed in stem and petiole trichomes.

It catalyses the reaction myricetin + S-adenosyl-L-methionine = laricitrin + S-adenosyl-L-homocysteine + H(+). Its pathway is flavonoid metabolism. In terms of biological role, flavonoid 3'-O-methyltransferase involved in the biosynthesis of polymethoxylated flavonoids natural products such as myricetin derivatives, aroma compounds possessing antioxidant properties and exhibiting pharmacological activities such as anti-carcinogen, anti-viral, anti-thrombotic, anti-diabetic, anti-atherosclerotic, and anti-inflammatory effects. Catalyzes S-adenosylmethionine-dependent regioselective 3'-O-methylation of flavonoids; active on various hydroxylated flavonoid substrates, including myricetin, thus producing 3'-methyl myricetin (laricitrin). This chain is Myricetin 3'-O-methyltransferase 4, found in Solanum lycopersicum (Tomato).